A 236-amino-acid polypeptide reads, in one-letter code: Purine nucleoside phosphorylase DeoD-type (236 aa).

His-5 contributes to the a purine D-ribonucleoside binding site. Phosphate is bound by residues Gly-21, Arg-25, Arg-44, and 88 to 91 (RVGS). A purine D-ribonucleoside contacts are provided by residues 180–182 (EME) and 204–205 (SD). Asp-205 (proton donor) is an active-site residue.

This sequence belongs to the PNP/UDP phosphorylase family. In terms of assembly, homohexamer; trimer of homodimers.

The enzyme catalyses a purine D-ribonucleoside + phosphate = a purine nucleobase + alpha-D-ribose 1-phosphate. The catalysed reaction is a purine 2'-deoxy-D-ribonucleoside + phosphate = a purine nucleobase + 2-deoxy-alpha-D-ribose 1-phosphate. In terms of biological role, catalyzes the reversible phosphorolytic breakdown of the N-glycosidic bond in the beta-(deoxy)ribonucleoside molecules, with the formation of the corresponding free purine bases and pentose-1-phosphate. This Psychromonas ingrahamii (strain DSM 17664 / CCUG 51855 / 37) protein is Purine nucleoside phosphorylase DeoD-type.